A 146-amino-acid polypeptide reads, in one-letter code: Large ribosomal subunit protein uL16c (146 aa).

It belongs to the universal ribosomal protein uL16 family. In terms of assembly, part of the 50S ribosomal subunit.

Its subcellular location is the plastid. The protein localises to the chloroplast. This Angiopteris evecta (Mule's foot fern) protein is Large ribosomal subunit protein uL16c.